We begin with the raw amino-acid sequence, 51 residues long: Putative inactivation escape 1 protein (51 aa).

In terms of tissue distribution, highly expressed in pancreas, heart and liver followed by brain, placenta, lung, skeletal muscle and kidney. Mostly expressed in females.

This Homo sapiens (Human) protein is Putative inactivation escape 1 protein (INE1).